The chain runs to 515 residues: RNA-binding region-containing protein 3 (515 aa).

The segment at 1 to 26 (MAVPEPSMPLSRGGPGSASLSPPRGD) is disordered. Position 21 is a phosphoserine (S21). The RRM 1 domain occupies 27–102 (RTLLVRHLPA…HTLVVEFAKE (76 aa)). Disordered regions lie at residues 107-133 (HSSC…EKKE), 215-254 (LHAP…EEDR), and 337-369 (ETEQ…PKPN). A Phosphoserine modification is found at S108. The segment covering 115 to 133 (AEKKKRLDDTVENDKEKKE) has biased composition (basic and acidic residues). Residues 218 to 230 (PLPPTSPQPPEEP) show a composition bias toward pro residues. A compositionally biased stretch (basic and acidic residues) spans 337-348 (ETEQNNEEKNSD). A Phosphoserine modification is found at S349. Residues 419 to 502 (CRIYVKNLAR…KPMVVQFARS (84 aa)) enclose the RRM 2 domain.

In terms of assembly, component of the U11/U12 snRNPs that are part of the U12-type spliceosome. Found in a complex with m(7)G-capped U12 snRNA. Interacts with PDCD7.

It is found in the nucleus. Functionally, participates in pre-mRNA U12-dependent splicing, performed by the minor spliceosome which removes U12-type introns. U12-type introns comprises less than 1% of all non-coding sequences. Binds to the 3'-stem-loop of m(7)G-capped U12 snRNA. The sequence is that of RNA-binding region-containing protein 3 (Rnpc3) from Rattus norvegicus (Rat).